A 1197-amino-acid chain; its full sequence is MAAPLRRDTLPDNGSYGVCRDGRVFFIDDEARATTWLHPRTGQPVNSGHMIRSDLPSGWEEGFTKEGASFFIDHNQRTTTFIHPVTGQISTENSDFRLQDQPGGRMLKQPSSTISEASTTVTTSTVDSTSGSKGSRSSGRVHSFGKRDHAIKRNPSVPVVVRGWLYKQDSSGMRLWKRKWFVLADFCLFYYKDSREESVLGSIPLPSYTIAPVGPEDHISRKYAFKAEHTGMRTYYFSADTQEDMNGWVRAMNQAALMQTHTVKRDECGHPDHVNVSEKLKKQAVPQTNHINSYVIPKPEVIQSDGLPEDKREGFVGEVEIQVTPREMEQARGKSPASRVVEVEVLAPGSTPPSRVASRAPSRAVSTPPVVQRNGTPIEQNGMPGCQRGATPSAQTPVQVQRRSTLEQVENWVKVQKEERHGLVSTESTVPRRTPPIHPKYGTMDKYQSLPKTSRQSPPAPHHQLPSEYKYSHDRLNHFQKIHGHTKRPTTHDNTVWQLFEWQQRQQFRHGSPSAPVYTPAPDYSTAVSSTRNNSDVSRSVSVPPTLADIPPPGPPGARLMSPRRPHTPAERVTVRPLEDRPIVEVPPSNSPHRLRSYKSATIERRSMPPSAYITHTVSAPSLHGKTADDTYMHLKKDLEYLDLKVSGTEALKGRPAKPVKVAESDVDVTLSRLCEQDKILQELEFRLSGLKDDKDKLESVLDVSHQQMEQYKDQPSHTDKIAYQQRLLQEDLVHIRADISRVSTEMERAWDDYSRMEQSVEQLRDVLQTQMTLCTSPQEKNQLKRELWRIEDVMTGLSSTKETFKITVDSVKNPERKLVPSVIESTVPSRCMTPSAAEVRSPQRSLTSSPLPLPLDNEDLRNRHPVPNWEEDDAPPRPPLPLLYDEDTPPVVPPLPKETSVIRHTSVRGLKRQSDERKRDRESSYSNGDYRLELRSYLSEPELPVSAHGADHVDPGYLTLQRRGLSGSSSRINQYGVASCSLRRDLELSTMERPKSALERLCSGEPQLEQQSQPQRVRMSVEEQLERMKRHQRALVRERKRNLSQGERHHSRASTRPVNSDPGSALFVEPYRPASDEWLTVRARPVMELELEPLDFEFDITRELSTPQKVWIPQRLIDDESDEDLSPEEKETRSRTVAKIKTLLSKSSMRSSEQMDFSDLDLALQQQERIMSVPRALATEASIKRRQVTAKAMSEG.

WW domains follow at residues 8-41 and 53-86; these read DTLP…HPRT and SDLP…HPVT. A disordered region spans residues 98–148; that stretch reads LQDQPGGRMLKQPSSTISEASTTVTTSTVDSTSGSKGSRSSGRVHSFGKRD. Residues 111-140 are compositionally biased toward low complexity; it reads SSTISEASTTVTTSTVDSTSGSKGSRSSGR. The PH domain occupies 158–257; sequence PVVVRGWLYK…WVRAMNQAAL (100 aa). 3 disordered regions span residues 348–384, 423–467, and 508–577; these read PGST…NGMP, LVST…QLPS, and FRHG…TVRP. Residues 528-546 show a composition bias toward low complexity; sequence VSSTRNNSDVSRSVSVPPT. Residues 568–577 show a composition bias toward basic and acidic residues; the sequence is TPAERVTVRP. Residues 678-799 adopt a coiled-coil conformation; it reads DKILQELEFR…RIEDVMTGLS (122 aa). Disordered regions lie at residues 830 to 928 and 1032 to 1064; these read SRCM…SYSN and HQRA…SDPG. The span at 913 to 924 shows a compositional bias: basic and acidic residues; that stretch reads RQSDERKRDRES. Positions 1016–1044 form a coiled coil; sequence QRVRMSVEEQLERMKRHQRALVRERKRNL. Positions 1032-1043 are enriched in basic residues; sequence HQRALVRERKRN.

It localises to the cell junction. The protein localises to the adherens junction. Its subcellular location is the cytoplasm. The protein resides in the cytoskeleton. It is found in the microtubule organizing center. It localises to the centrosome. Its function is as follows. Required for zonula adherens biogenesis and maintenance. The polypeptide is Pleckstrin homology domain-containing family A member 7 (plekha7) (Danio rerio (Zebrafish)).